The primary structure comprises 1118 residues: Pleckstrin homology domain-containing family A member 7 (1118 aa).

WW domains are found at residues 8–41 and 53–86; these read DTLPEHWSYGVCRDGRVFFINDQLRCTTWLHPRT and SDLPRGWEEGFTEEGASFFIDHNQQTTTFRHPVT. Basic and acidic residues predominate over residues 100–113; sequence EEPHPHMSKPERNQ. A disordered region spans residues 100 to 145; sequence EEPHPHMSKPERNQRPSSMVSETSTAGTTSTLEAKPGPKIVKSSSK. The segment covering 114 to 131 has biased composition (polar residues); it reads RPSSMVSETSTAGTTSTL. The PH domain maps to 163–281; the sequence is PVVVRGWLHK…WVRAMNQAAQ (119 aa). 2 stretches are compositionally biased toward basic and acidic residues: residues 334–355 and 434–443; these read FNRREQEEERFRAQRDPLEGRR and HWTKAQKGDG. Disordered stretches follow at residues 334 to 512 and 528 to 629; these read FNRR…RRAH and QFRH…RRSM. The span at 452-481 shows a compositional bias: polar residues; sequence LPRQGPSQPLSFPENYQSLPKSTRHLSGSS. Basic and acidic residues predominate over residues 494 to 512; that stretch reads YAQDRASHLKMSSEERRAH. Phosphoserine occurs at positions 533, 542, 566, 601, 605, and 609. An interaction with CTNND1 region spans residues 535-693; that stretch reads TAPIGAGSPE…AESDIDVKLS (159 aa). Residues 564-579 are compositionally biased toward pro residues; the sequence is PPSPSDIPPPGPPRPF. The span at 586 to 602 shows a compositional bias: basic and acidic residues; the sequence is TPAERVTVKPPEQRRSV. Residues 697-798 adopt a coiled-coil conformation; the sequence is EQDRILQDLE…LQEQHRRAFF (102 aa). Disordered stretches follow at residues 839-873 and 886-968; these read KTVPLFPHPSVPSLSPTESKPALQPSPPTSPVRTP and VPYR…EQGQ. A phosphoserine mark is found at Ser-857 and Ser-864. Position 867 is a phosphothreonine (Thr-867). Residues Ser-868, Ser-900, and Ser-904 each carry the phosphoserine modification. Residues 930-939 are compositionally biased toward pro residues; the sequence is DQPPAVPPLP. Positions 955–966 are enriched in basic and acidic residues; the sequence is RQSDERKRDREQ. Phosphoserine occurs at positions 983 and 990. Residues 1003 to 1024 form a disordered region; it reads GSESRYQTLPGRGLSGSTSRLQ. Residues 1064-1091 adopt a coiled-coil conformation; the sequence is QRGKMSAEEQLERMKRHQKALVRERKRT.

Interacts with CAMSAP3 and CTNND1. Interacts (via WW domains) with TSPAN33 (via cytoplasmic domain) and with PDZD11; the interaction with TSPAN33 is dependent on PDZD11 being bound to PLEKHA7 and facilitates the docking of ADAM10 to zonula adherens through interaction of TSPAN33 with ADAM10. Expressed in kidney and lung (at protein level).

The protein resides in the cell junction. It is found in the adherens junction. Its subcellular location is the cytoplasm. The protein localises to the cytoskeleton. It localises to the microtubule organizing center. The protein resides in the centrosome. Functionally, required for zonula adherens biogenesis and maintenance. Acts via its interaction with CAMSAP3, which anchors microtubules at their minus-ends to zonula adherens, leading to the recruitment of KIFC3 kinesin to the junctional site. Mediates docking of ADAM10 to zonula adherens through a PDZD11-dependent interaction with the ADAM10-binding protein TSPAN33. This is Pleckstrin homology domain-containing family A member 7 (Plekha7) from Mus musculus (Mouse).